We begin with the raw amino-acid sequence, 445 residues long: Phosphatidate cytidylyltransferase 2 (445 aa).

Over residues 1–39 (MTELRQRVAHEPVAPPEDKESESEAKVDGETASDSESRA) the composition is skewed to basic and acidic residues. Residues 1–49 (MTELRQRVAHEPVAPPEDKESESEAKVDGETASDSESRAESAPLPVSAD) are disordered. Serine 21 is modified (phosphoserine). Threonine 31 bears the Phosphothreonine mark. Residues serine 33, serine 35, and serine 37 each carry the phosphoserine modification. Phosphothreonine is present on threonine 51. Helical transmembrane passes span 79-99 (MIAFFFIIIYLGPMVLMIIVM), 132-152 (FLLCVNYFFYGETVTDYFFTL), 166-186 (HRFISFTLYLIGFCMFVLSLV), 213-233 (LVIHNLFEGMIWFIVPISCVI), 262-282 (GFIGGFFATVVFGLLLSYVMS), and 340-360 (IALSTFASLIGPFGGFFASGF).

This sequence belongs to the CDS family. Homodimer. In terms of tissue distribution, widely expressed. Expressed in heart, brain and retina, and to a lesser extent in placenta, lung, liver, skeletal muscle, kidney and pancreas.

The protein resides in the endoplasmic reticulum membrane. It carries out the reaction a 1,2-diacyl-sn-glycero-3-phosphate + CTP + H(+) = a CDP-1,2-diacyl-sn-glycerol + diphosphate. It catalyses the reaction 1-octadecanoyl-2-(5Z,8Z,11Z,14Z-eicosatetraenoyl)-sn-glycero-3-phosphate + CTP + H(+) = 1-octadecanoyl-2-(5Z,8Z,11Z,14Z-eicosatetraenoyl)-sn-glycero-3-cytidine-5'-diphosphate + diphosphate. The enzyme catalyses 1-octadecanoyl-2-(9Z,12Z-octadecadienoyl)-sn-glycero-3-phosphate + CTP + H(+) = 1-octadecanoyl-2-(9Z,12Z-octadecadienoyl)-sn-glycero-3-cytidine-5'-diphosphate + diphosphate. The catalysed reaction is 1-hexadecanoyl-2-(5Z,8Z,11Z,14Z-eicosatetraenoyl)-sn-glycero-3-phosphate + CTP + H(+) = 1-hexadecanoyl-2-(5Z,8Z,11Z,14Z-eicosatetraenoyl)-sn-glycero-3-cytidine-5'-diphosphate + diphosphate. It carries out the reaction 1,2-di-(5Z,8Z,11Z,14Z)-eicosatetraenoyl-sn-glycero-3-phosphate + CTP + H(+) = 1,2-di-(5Z,8Z,11Z,14Z-eicosatetraenoyl)-sn-glycero-3-cytidine-5'-diphosphate + diphosphate. It catalyses the reaction 1-octadecanoyl-2-(9Z-octadecenoyl)-sn-glycero-3-phosphate + CTP + H(+) = 1-octadecanoyl-2-(9Z-octadecenoyl)-sn-glycero-3-cytidine-5'-diphosphate + diphosphate. The enzyme catalyses 1-octadecanoyl-2-(4Z,7Z,10Z,13Z,16Z,19Z-docosahexaenoyl)-sn-glycero-3-phosphate + CTP + H(+) = 1-octadecanoyl-2-(4Z,7Z,10Z,13Z,16Z,19Z-docosahexaenoyl)-sn-glycero-3-cytidine-5'-diphosphate + diphosphate. The catalysed reaction is 1,2-di-(9Z,12Z-octadecadienoyl)-sn-glycero-3-phosphate + CTP + H(+) = 1,2-di-(9Z,12Z-octadecadienoyl)-sn-glycero-3-cytidine-5'-diphosphate + diphosphate. It carries out the reaction 1,2-di-(9Z-octadecenoyl)-sn-glycero-3-phosphate + CTP + H(+) = 1,2-di-(9Z-octadecenoyl)-sn-glycero-3-cytidine-5'-diphosphate + diphosphate. It participates in phospholipid metabolism; CDP-diacylglycerol biosynthesis; CDP-diacylglycerol from sn-glycerol 3-phosphate: step 3/3. With respect to regulation, inhibited by its anionic phospholipid end products, with phosphatidylinositol-(4,5)- bisphosphate (PIP2) showing the strongest inhibition. Inhibition is also acyl chain specific, with 1-stearoyl-2-arachidonoyl-snphosphatidylinositol showing the strongest inhibition. Its function is as follows. Catalyzes the conversion of phosphatidic acid (PA) to CDP-diacylglycerol (CDP-DAG), an essential intermediate in the synthesis of phosphatidylglycerol, cardiolipin and phosphatidylinositol. Exhibits specificity for the nature of the acyl chains at the sn-1 and sn-2 positions in the substrate, PA and the preferred acyl chain composition is 1-stearoyl-2-arachidonoyl-sn-phosphatidic acid. Plays an important role in regulating the growth and maturation of lipid droplets which are storage organelles at the center of lipid and energy homeostasis. In Homo sapiens (Human), this protein is Phosphatidate cytidylyltransferase 2.